The sequence spans 326 residues: Target of rapamycin complex subunit LST8 (326 aa).

N-acetylmethionine is present on methionine 1. WD repeat units follow at residues 1-37, 40-80, 83-122, 126-165, and 168-207; these read MNTT…CTRT, HQDS…PIIS, GVSK…LQCQ, QVNA…NEQL, and EPEF…GDEV. Threonine 51 bears the Phosphothreonine mark. Lysine 86 participates in a covalent cross-link: Glycyl lysine isopeptide (Lys-Gly) (interchain with G-Cter in SUMO3). Residues lysine 215, lysine 245, and lysine 261 each participate in a glycyl lysine isopeptide (Lys-Gly) (interchain with G-Cter in SUMO3) cross-link. One copy of the WD 6 repeat lies at 218 to 257; sequence AHTRYALQCRFSPDSTLLATCSADQTCKIWRTSNFSLMTE. A WD 7 repeat occupies 268-309; the sequence is SSRGWMWGCAFSGDSQYIVTASSDNLARLWCVETGEIKREYG. Lysine 305 participates in a covalent cross-link: Glycyl lysine isopeptide (Lys-Gly) (interchain with G-Cter in SUMO3); alternate. Residues lysine 305 and lysine 313 each participate in a glycyl lysine isopeptide (Lys-Gly) (interchain with G-Cter in ubiquitin); alternate cross-link. Lysine 313 participates in a covalent cross-link: Glycyl lysine isopeptide (Lys-Gly) (interchain with G-Cter in SUMO1); alternate.

Belongs to the WD repeat LST8 family. In terms of assembly, part of the mechanistic target of rapamycin complex 1 (mTORC1) which contains MTOR, MLST8 and RPTOR. mTORC1 associates with AKT1S1/PRAS40, which inhibits its activity. mTORC1 binds to and is inhibited by FKBP12-rapamycin. Within mTORC1, interacts directly with MTOR and RPTOR. Component of the mechanistic target of rapamycin complex 2 (mTORC2), consisting in two heterotretramers composed of MTOR, MLST8, RICTOR and MAPKAP1/SIN1. Contrary to mTORC1, mTORC2 does not bind to and is not sensitive to FKBP12-rapamycin. mTORC1 and mTORC2 associate with DEPTOR, which regulates their activity. Interacts with RHEB. Interacts with MEAK7. Interacts with SIK3. Interacts with SLC38A7; this interaction promotes the recruitment of mTORC1 to the lysosome and its subsequent activation. Phosphorylation at Thr-51 by CDK1 promotes ubiquitination by the SCF(FBXW7) complex, followed by degradation. In terms of processing, ubiquitination by the SCF(FBXW7) and SCF(FBXW11) complexes following phosphorylation at Thr-51 by CDK1, leads to its degradation by the proteasome. Ubiquitination at Lys-305 and Lys-313 by TRAF2 via 'Lys-63'-linked polyubiquitin chains inhibits formation of the mTORC2 complex, while promoting formation of the mTORC1 complex: ubiquitination disrupts the interaction between MLST8 and MAPKAP1/SIN1 to favor mTORC1 assembly. Deubiquitination at Lys-305 and Lys-313 by OTUD7B promotes MLST8 interaction with MAPKAP1/SIN1, facilitating mTORC2 assembly. Post-translationally, sumoylation with SUMO1, SUMO2 and SUMO3 promotes assembly of both mTORC1 and mTORC2 complexes. Expressed at highest levels in the brain and testis, followed by lung, heart, kidney, skeletal muscle, spleen and liver. Also expressed in epididymal, abdominal and brown fat, small intestine and pancreas.

It localises to the lysosome membrane. The protein resides in the cytoplasm. Subunit of both mTORC1 and mTORC2, which regulates cell growth and survival in response to nutrient and hormonal signals. mTORC1 is activated in response to growth factors or amino acids. In response to nutrients, mTORC1 is recruited to the lysosome membrane and promotes protein, lipid and nucleotide synthesis by phosphorylating several substrates, such as ribosomal protein S6 kinase (RPS6KB1 and RPS6KB2) and EIF4EBP1 (4E-BP1). In the same time, it inhibits catabolic pathways by phosphorylating the autophagy initiation components ULK1 and ATG13, as well as transcription factor TFEB, a master regulators of lysosomal biogenesis and autophagy. The mTORC1 complex is inhibited in response to starvation and amino acid depletion. Within mTORC1, MLST8 interacts directly with MTOR and enhances its kinase activity. In nutrient-poor conditions, stabilizes the MTOR-RPTOR interaction and favors RPTOR-mediated inhibition of MTOR activity. As part of the mTORC2 complex, transduces signals from growth factors to pathways involved in proliferation, cytoskeletal organization, lipogenesis and anabolic output. mTORC2 is also activated by growth factors, but seems to be nutrient-insensitive. In response to growth factors, mTORC2 phosphorylates and activates AGC protein kinase family members, including AKT (AKT1, AKT2 and AKT3), PKC (PRKCA, PRKCB and PRKCE) and SGK1. mTORC2 functions upstream of Rho GTPases to regulate the actin cytoskeleton, probably by activating one or more Rho-type guanine nucleotide exchange factors. mTORC2 promotes the serum-induced formation of stress-fibers or F-actin. mTORC2 plays a critical role in AKT1 activation by mediating phosphorylation of different sites depending on the context, such as 'Thr-450', 'Ser-473', 'Ser-477' or 'Thr-479', facilitating the phosphorylation of the activation loop of AKT1 on 'Thr-308' by PDPK1/PDK1 which is a prerequisite for full activation. mTORC2 regulates the phosphorylation of SGK1 at 'Ser-422'. mTORC2 also modulates the phosphorylation of PRKCA on 'Ser-657'. Within mTORC2, MLST8 acts as a bridge between MAPKAP1/SIN1 and MTOR. The chain is Target of rapamycin complex subunit LST8 from Rattus norvegicus (Rat).